The primary structure comprises 666 residues: Collagen alpha-1(XXV) chain (666 aa).

The segment at 1–24 is disordered; that stretch reads MLVKKLAGKGGGRESGSEDPRPLG. Residues 1-33 lie on the Cytoplasmic side of the membrane; that stretch reads MLVKKLAGKGGGRESGSEDPRPLGQRCAGTMPS. The segment covering 11 to 21 has biased composition (basic and acidic residues); sequence GGRESGSEDPR. A helical; Signal-anchor for type II membrane protein membrane pass occupies residues 34-54; it reads CTALATLLSVVAVAFCFYLGV. Topologically, residues 55-666 are extracellular; the sequence is KTNDLQARIA…GLPMPGCWQK (612 aa). A disordered region spans residues 116–168; the sequence is LECNCPAGPPGKRGKRGRRGESGPPGQPGPQGPPGPKGDKGEQGDQGPRMVFP. The Collagen-like 1 domain occupies 121–164; sequence PAGPPGKRGKRGRRGESGPPGQPGPQGPPGPKGDKGEQGDQGPR. Residues 140–151 are compositionally biased toward pro residues; the sequence is PGQPGPQGPPGP. Residues 181 to 188 form an interaction with amyloid-beta peptide region; it reads LIKRRLIK. 2 disordered regions span residues 189-428 and 445-666; these read GDQG…ATEI and LTVT…CWQK. 7 consecutive Collagen-like domains span residues 192 to 247, 249 to 308, 311 to 370, 373 to 425, 455 to 514, 529 to 588, and 589 to 648; these read GQAG…QKGS, GAPG…PGSS, GIKG…AGPP, GERG…DPGA, GPQG…KGEK, GPPG…KGAM, and GEPG…DGLD. Over residues 196–208 the composition is skewed to pro residues; sequence PPGPPGPPGPRGP. The span at 230 to 245 shows a compositional bias: low complexity; that stretch reads PGEQGLMGPLGPPGQK. The segment covering 280–290 has biased composition (basic and acidic residues); it reads EPGKEGEKGDA. A compositionally biased stretch (low complexity) spans 336–358; sequence LPGIKGEPGFIGPQGEPGLPGLP. Basic and acidic residues-rich tracts occupy residues 361-377 and 398-407; these read KGDR…ERGD and SKGDRGDKGD. Low complexity predominate over residues 457–466; sequence QGLQGPKGEQ. Gly residues predominate over residues 494 to 503; the sequence is GEKGGLGLPG. Residues 528–543 are compositionally biased toward pro residues; the sequence is IGPPGPPGPHGPPGPM. Positions 615–638 are enriched in basic and acidic residues; sequence RGEKGDLGEKGEKGFRGVKGEKGE.

As to quaternary structure, forms homodimers and homotrimers. Binds to the fibrillized forms of amyloid-beta protein 40 (beta-APP40) and amyloid-betad protein 42 (beta-APP42). Found associated with beta-APP42 more frequently than with beta-APP40. Undergoes proteolytic cleavage by furin protease to yield the soluble collagen-like Alzheimer amyloid plaque component. Post-translationally, glycosylated. In terms of processing, hydroxylated on proline and lysine residues. As to expression, expressed predominantly in neurons with low levels also detected in heart, testis and eye.

It is found in the membrane. Its function is as follows. Inhibits fibrillization of amyloid-beta peptide during the elongation phase. Has also been shown to assemble amyloid fibrils into protease-resistant aggregates. Binds heparin. The polypeptide is Collagen alpha-1(XXV) chain (Mus musculus (Mouse)).